The primary structure comprises 1079 residues: Electrogenic sodium bicarbonate cotransporter 1 (1079 aa).

Residues 1-62 (MEDEAVLDRG…EKREKERISE (62 aa)) are required for interaction with AHCYL1. The Cytoplasmic portion of the chain corresponds to 1-466 (MEDEAVLDRG…FASDFYDALN (466 aa)). Y30 carries the phosphotyrosine modification. The segment covering 39 to 52 (YRRRRRHKRKTGHK) has biased composition (basic residues). Positions 39-78 (YRRRRRHKRKTGHKEKREKERISENYSDKSDVENADESSS) are disordered. T49 is subject to Phosphothreonine; by PKA. Residues 53-70 (EKREKERISENYSDKSDV) are compositionally biased toward basic and acidic residues. 7 positions are modified to phosphoserine: S61, S65, S68, S223, S232, S233, and S245. The tract at residues 237–265 (MFTSPDNGSPAMTHRNLTSSSLNDISDKP) is disordered. T249 and T254 each carry phosphothreonine. The segment covering 251 to 260 (RNLTSSSLND) has biased composition (polar residues). S256, S257, and S262 each carry phosphoserine. The helical transmembrane segment at 467-491 (IQSLSAILFIYLATVTNAITFGGLL) threads the bilayer. Topologically, residues 492 to 501 (GDATDNMQGV) are extracellular. A helical membrane pass occupies residues 502–520 (LESFLGTAVSGAIFCLFAG). A topological domain (cytoplasmic) is located at residue Q521. Residues 522–542 (PLTILSSTGPVLVFERLLFNF) form a discontinuously helical membrane-spanning segment. At 543–550 (SKDHNFDY) the chain is on the extracellular side. Residues 551–571 (LEFRLWIGLWSAFLCLILVAT) form a helical membrane-spanning segment. At 572–585 (DASFLVQYFTRFTE) the chain is on the cytoplasmic side. A helical membrane pass occupies residues 586–609 (EGFSSLISFIFIYDAFKKMIKLAD). Residues 610–692 (YYPINSDFKV…GNNCNFVPDV (83 aa)) lie on the Extracellular side of the membrane. Residues 693-710 (TLMSFILFLGTYTSSMAL) form a helical membrane-spanning segment. The Cytoplasmic segment spans residues 711–725 (KKFKTSRYFPTTARK). A helical membrane pass occupies residues 726–745 (LISDFAIILSILIFCVIDAL). At 746–779 (VGVDTPKLIVPSEFKPTSPNRGWFVPPFGGNPWW) the chain is on the extracellular side. An interaction with CA4 region spans residues 748-779 (VDTPKLIVPSEFKPTSPNRGWFVPPFGGNPWW). A helical transmembrane segment spans residues 780 to 807 (VYLAAAIPALLVTILIFMDQQITAVIVN). Topologically, residues 808-819 (RKEHKLKKGAGY) are cytoplasmic. The helical transmembrane segment at 820-836 (HLDLFWVAILMVVCSFM) threads the bilayer. Position 837 (A837) is a topological domain, extracellular. A discontinuously helical membrane pass occupies residues 838–855 (LPWYVAATVISIAHIDSL). Residues 856–877 (KMETETSAPGEQPKFLGVREQR) are Cytoplasmic-facing. The chain crosses the membrane as a helical span at residues 878–894 (VTGTLVFILTGLSVFMA). The Extracellular segment spans residues 895–901 (PILKFIP). A helical membrane pass occupies residues 902 to 918 (MPVLYGVFLYMGVASLN). Residues 919 to 960 (GVQFMDRLKLLLMPLKHQPDFIYLRHVPLRRVHLFTFLQVLC) lie on the Cytoplasmic side of the membrane. The discontinuously helical intramembrane region spans 961 to 986 (LALLWILKSTVAAIIFPVMILALVAV). At 987–1079 (RKGMDYLFSQ…STFLERHTSC (93 aa)) the chain is on the cytoplasmic side. Positions 1002 to 1004 (LDD) are CA2-binding. A disordered region spans residues 1012–1079 (KKKEDEKKKK…STFLERHTSC (68 aa)). The residue at position 1026 (S1026) is a Phosphoserine; by PKA. Residue S1029 is modified to Phosphoserine. Positions 1030–1033 (DNDD) are CA2-binding. S1034 and S1044 each carry phosphoserine. The interval 1057–1059 (FLS) is required for basolateral targeting. Positions 1062–1079 (KPSDREKSSTFLERHTSC) are enriched in basic and acidic residues. At S1069 the chain carries Phosphoserine.

Belongs to the anion exchanger (TC 2.A.31) family. Homodimer. Interacts with CA2/carbonic anhydrase 2 and CA4/carbonic anhydrase 4 which may regulate transporter activity. Isoform 1 but not isoform 2 interacts with AHCYL1 (via PEST domain when phosphorylated); the interaction increases SLC4A4 isoform 1 activity. Interacts with AHCYL2. Post-translationally, phosphorylation of Ser-1026 by PKA increases the binding of CA2 and changes the Na(+):HCO3(-) stoichiometry of the transporter from 3:1 to 2:1. Phosphorylated in presence of STK39 and dephosphorylated in presence of PP1 phosphatase; phosphorylation seems to inhibit SLC4A4 activity. In terms of processing, N-glycosylated. May not be necessary for the transporter basic functions. Expressed in colonic mucosa, kidney cortex and to gastric mucosa.

It localises to the basolateral cell membrane. The protein resides in the cell membrane. The catalysed reaction is 2 hydrogencarbonate(out) + Na(+)(out) = 2 hydrogencarbonate(in) + Na(+)(in). It carries out the reaction 3 hydrogencarbonate(out) + Na(+)(out) = 3 hydrogencarbonate(in) + Na(+)(in). Its function is as follows. Electrogenic sodium/bicarbonate cotransporter with a Na(+):HCO3(-) stoichiometry varying from 1:2 to 1:3. May regulate bicarbonate influx/efflux at the basolateral membrane of cells and regulate intracellular pH. The chain is Electrogenic sodium bicarbonate cotransporter 1 (SLC4A4) from Oryctolagus cuniculus (Rabbit).